Here is a 292-residue protein sequence, read N- to C-terminus: G1/S-specific cyclin-D3 (292 aa).

One can recognise a Cyclin N-terminal domain in the interval 27–152 (VLQSLLRLEE…LVLGKLKWDL (126 aa)). The interval 256–292 (REAAQTAPSPVPKAPRGSSSQGPSQTSTPTDVTAIHL) is disordered. Phosphoserine occurs at positions 264 and 279. Over residues 272-285 (GSSSQGPSQTSTPT) the composition is skewed to low complexity. The residue at position 283 (Thr283) is a Phosphothreonine.

Belongs to the cyclin family. Cyclin D subfamily. In terms of assembly, interacts with the CDK4 and CDK6 protein kinases to form a serine/threonine kinase holoenzyme complex. The cyclin subunit imparts substrate specificity to the complex. Interacts with ATF5. Interacts with EIF3K. Component of the ternary complex cyclin D/CDK4/CDKN1B required for nuclear translocation and modulation of CDK4-mediated kinase activity. Can form similar complexes with either CDKN1A or CDKN2A. Post-translationally, phosphorylation at Thr-283 by MAP kinases is required for ubiquitination and degradation by the DCX(AMBRA1) complex. Ubiquitinated by the DCX(AMBRA1) complex during the transition from G1 to S cell phase, leading to its degradation: ubiquitination is dependent on Thr-283 phosphorylation. The DCX(AMBRA1) complex represents the major regulator of CCND3 stability during the G1/S transition. Polyubiquitinated by the SCF(FBXL2) complex, leading to proteasomal degradation.

It is found in the nucleus. It localises to the cytoplasm. In terms of biological role, regulatory component of the cyclin D3-CDK4 (DC) complex that phosphorylates and inhibits members of the retinoblastoma (RB) protein family including RB1 and regulates the cell-cycle during G(1)/S transition. Phosphorylation of RB1 allows dissociation of the transcription factor E2F from the RB/E2F complex and the subsequent transcription of E2F target genes which are responsible for the progression through the G(1) phase. Hypophosphorylates RB1 in early G(1) phase. Cyclin D-CDK4 complexes are major integrators of various mitogenenic and antimitogenic signals. Component of the ternary complex, cyclin D3/CDK4/CDKN1B, required for nuclear translocation and activity of the cyclin D-CDK4 complex. Shows transcriptional coactivator activity with ATF5 independently of CDK4. This Mus musculus (Mouse) protein is G1/S-specific cyclin-D3.